The following is a 401-amino-acid chain: MSESAFAERIVHNLLDTDFYKLTMMQGVLHNYPDADVEWEFRCRNGEDLRPYLGEIRNQLERLGDLTLDDGQLAFLERISFLKPDFLRFLRLFRFNLRYVHVGIENDQLFLRLKGPWLHVILFEVPLLAIISEVRNRNLHPHMRLAEARDQLYRKFDWLRAHASDDELAELQVADFGTRRRFSSRVQEEVVRVLRDDFPGRFVGTSNVDLAWKLDIKPLGTMAHEWIMAHQQLGPRLIDSQIAALDCWVREYRGLLGIALTDCITMDAFLGDFDLYFAKLFDGLRHDSGEPVAWAEKAIAHYQKLGIDPMTKTLVFSDGLNLTRSLEIFRALRGRINVSFGIGTNLTCDIPGVAPMSIVLKMTDCNGAPVAKISDEAAKTQCRDENFVAYMRHVFKVPSKE.

Phosphohistidine; by autocatalysis is present on histidine 224.

It belongs to the NAPRTase family. Post-translationally, transiently phosphorylated on a His residue during the reaction cycle. Phosphorylation strongly increases the affinity for substrates and increases the rate of nicotinate D-ribonucleotide production. Dephosphorylation regenerates the low-affinity form of the enzyme, leading to product release.

It carries out the reaction nicotinate + 5-phospho-alpha-D-ribose 1-diphosphate + ATP + H2O = nicotinate beta-D-ribonucleotide + ADP + phosphate + diphosphate. It functions in the pathway cofactor biosynthesis; NAD(+) biosynthesis; nicotinate D-ribonucleotide from nicotinate: step 1/1. In terms of biological role, catalyzes the synthesis of beta-nicotinate D-ribonucleotide from nicotinate and 5-phospho-D-ribose 1-phosphate at the expense of ATP. This is Nicotinate phosphoribosyltransferase from Pseudomonas putida (strain ATCC 700007 / DSM 6899 / JCM 31910 / BCRC 17059 / LMG 24140 / F1).